The sequence spans 128 residues: CD59 glycoprotein (128 aa).

An N-terminal signal peptide occupies residues 1–25 (MGIQGGSVLFGLLLVLAVFCHSGNS). Positions 26 to 108 (LQCYSCPYPT…ALKNGGTTLS (83 aa)) constitute a UPAR/Ly6 domain. Disulfide bonds link Cys-28-Cys-51, Cys-31-Cys-38, Cys-44-Cys-64, Cys-70-Cys-88, and Cys-89-Cys-94. N-linked (GlcNAc...) asparagine glycosylation occurs at Asn-43. The GPI-anchor amidated asparagine moiety is linked to residue Asn-102. A propeptide spans 103-128 (GGTTLSKKTVLLLVIPFLVAAWSLHP) (removed in mature form).

As to quaternary structure, interacts with T-cell surface antigen CD2. Post-translationally, N- and O-glycosylated.

The protein localises to the cell membrane. It localises to the secreted. Functionally, potent inhibitor of the complement membrane attack complex (MAC) action, which protects self-cells from damage during complement activation. Acts by binding to the beta-haipins of C8 (C8A and C8B) components of the assembling MAC, forming an intermolecular beta-sheet that prevents incorporation of the multiple copies of C9 required for complete formation of the osmolytic pore. This chain is CD59 glycoprotein, found in Aotus trivirgatus (Three-striped night monkey).